A 314-amino-acid polypeptide reads, in one-letter code: Mitochondrial thiamine pyrophosphate carrier 1 (314 aa).

6 helical membrane passes run 14-30, 84-100, 116-136, 170-186, 217-233, and 285-302; these read VAAW…GLLA, LLYV…YSLF, LVVG…FDVL, GSIA…SIMF, SAGT…TFPL, and GILV…VSFW. Solcar repeat units follow at residues 14–103, 110–195, and 210–310; these read VAAW…FNRY, EARL…IRIY, and ELAT…AIHY.

The protein belongs to the mitochondrial carrier (TC 2.A.29) family.

It localises to the mitochondrion inner membrane. Functionally, mitochondrial transporter that mediates uptake of thiamine pyrophosphate (ThPP) into mitochondria. The polypeptide is Mitochondrial thiamine pyrophosphate carrier 1 (TPC1) (Saccharomyces cerevisiae (strain YJM789) (Baker's yeast)).